The primary structure comprises 503 residues: Probable cytosol aminopeptidase (503 aa).

The Mn(2+) site is built by lysine 274 and aspartate 279. Lysine 286 is an active-site residue. Positions 297, 356, and 358 each coordinate Mn(2+). Residue arginine 360 is part of the active site.

It belongs to the peptidase M17 family. Mn(2+) serves as cofactor.

Its subcellular location is the cytoplasm. The catalysed reaction is Release of an N-terminal amino acid, Xaa-|-Yaa-, in which Xaa is preferably Leu, but may be other amino acids including Pro although not Arg or Lys, and Yaa may be Pro. Amino acid amides and methyl esters are also readily hydrolyzed, but rates on arylamides are exceedingly low.. It catalyses the reaction Release of an N-terminal amino acid, preferentially leucine, but not glutamic or aspartic acids.. Its function is as follows. Presumably involved in the processing and regular turnover of intracellular proteins. Catalyzes the removal of unsubstituted N-terminal amino acids from various peptides. The sequence is that of Probable cytosol aminopeptidase from Burkholderia multivorans (strain ATCC 17616 / 249).